The primary structure comprises 1072 residues: Translation initiation factor IF-2 (1072 aa).

Disordered stretches follow at residues 55–369 (ILDK…TGTA) and 426–452 (ELVD…VSKQ). Composition is skewed to low complexity over residues 91–100 (AEASQAAEPA), 108–118 (EPATFAAEEPV), 126–179 (APRA…AEVA), and 186–212 (EAPQ…PSVQ). The segment covering 218-230 (PQPPPRSPVPPAV) has biased composition (pro residues). Residues 231 to 245 (RTPSSTSSSATVVSR) show a composition bias toward low complexity. Positions 253 to 307 (QRGGPGGGRPGGPGGPGGRPGGPGGPGGRPGGPGGPGGRPGGPGGPGGRPGGPGG) are enriched in gly residues. Basic and acidic residues predominate over residues 426 to 436 (ELVDVSKNKER). The 168-residue stretch at 570–737 (PRPPVVAIMG…NLALQAEVLE (168 aa)) folds into the tr-type G domain. A G1 region spans residues 579–586 (GHVDHGKT). GTP is bound at residue 579 to 586 (GHVDHGKT). Positions 604–608 (GITQH) are G2. The segment at 625-628 (DTPG) is G3. GTP is bound by residues 625 to 629 (DTPGH) and 679 to 682 (NKMD). The G4 stretch occupies residues 679–682 (NKMD). Residues 715–717 (SAK) form a G5 region.

Belongs to the TRAFAC class translation factor GTPase superfamily. Classic translation factor GTPase family. IF-2 subfamily.

Its subcellular location is the cytoplasm. One of the essential components for the initiation of protein synthesis. Protects formylmethionyl-tRNA from spontaneous hydrolysis and promotes its binding to the 30S ribosomal subunits. Also involved in the hydrolysis of GTP during the formation of the 70S ribosomal complex. This Myxococcus xanthus (strain DK1622) protein is Translation initiation factor IF-2.